Consider the following 220-residue polypeptide: UPF0502 protein VVA1225 (220 aa).

The protein belongs to the UPF0502 family.

The sequence is that of UPF0502 protein VVA1225 from Vibrio vulnificus (strain YJ016).